A 428-amino-acid chain; its full sequence is Sialidase-3 (428 aa).

The FRIP motif motif lies at 24 to 27 (YRIP). R25 and R45 together coordinate substrate. Catalysis depends on D50, which acts as the Proton acceptor. One copy of the BNR 1 repeat lies at 129 to 140 (IYSQDAGCSWSE). Positions 179 and 181 each coordinate substrate. The BNR 2 repeat unit spans residues 203–214 (IYSDDLGVTWHH). Substrate contacts are provided by E225 and R245. Residues 254-265 (ALSTDHGEGFQR) form a BNR 3 repeat. Residues 294–318 (RCQDSSSKDAPTIQQSSPGSSLRLE) form a disordered region. Positions 301–313 (KDAPTIQQSSPGS) are enriched in polar residues. S313 carries the phosphoserine modification. R340 serves as a coordination point for substrate. The Nucleophile role is filled by Y370. The active site involves E387.

It belongs to the glycosyl hydrolase 33 family. As to quaternary structure, interacts with CAV1; this interaction enhances NEU3 sialidase activity within caveola. Interacts with EGFR; this interaction mediates desialylation of EGFR and enhances downstream signaling. Post-translationally, palmitoylated; may regulate intracellular trafficking and anchorage to plasma membrane and endomembranes. As to expression, highly expressed in skeletal muscle, testis, adrenal gland and thymus, followed by pancreas, liver, heart and thymus. Weakly expressed in kidney, placenta, brain and lung.

The protein resides in the cell membrane. It is found in the membrane. The protein localises to the caveola. It localises to the early endosome membrane. Its subcellular location is the recycling endosome membrane. The protein resides in the lysosome membrane. The enzyme catalyses Hydrolysis of alpha-(2-&gt;3)-, alpha-(2-&gt;6)-, alpha-(2-&gt;8)- glycosidic linkages of terminal sialic acid residues in oligosaccharides, glycoproteins, glycolipids, colominic acid and synthetic substrates.. The catalysed reaction is a ganglioside GD1a + H2O = a ganglioside GM1 + N-acetylneuraminate. It catalyses the reaction a ganglioside GD1a (d18:1(4E)) + H2O = a ganglioside GM1 (d18:1(4E)) + N-acetylneuraminate. It carries out the reaction a ganglioside GD1b + H2O = a ganglioside GM1 + N-acetylneuraminate. The enzyme catalyses a ganglioside GD1b (d18:1(4E)) + H2O = a ganglioside GM1 (d18:1(4E)) + N-acetylneuraminate. The catalysed reaction is a ganglioside GD3 + H2O = a ganglioside GM3 + N-acetylneuraminate. It catalyses the reaction a ganglioside GD3 (d18:1(4E)) + H2O = a ganglioside GM3 (d18:1(4E)) + N-acetylneuraminate. It carries out the reaction a ganglioside GM3 + H2O = a beta-D-galactosyl-(1-&gt;4)-beta-D-glucosyl-(1&lt;-&gt;1)-ceramide + N-acetylneuraminate. The enzyme catalyses a ganglioside GM1 + H2O = a ganglioside GA1 + N-acetylneuraminate. The catalysed reaction is a ganglioside GM1 (d18:1(4E)) + H2O = a ganglioside GA1 (d18:1(4E)) + N-acetylneuraminate. It catalyses the reaction a ganglioside GM2 (d18:1(4E)) + H2O = a ganglioside GA2 (d18:1(4E)) + N-acetylneuraminate. It carries out the reaction a ganglioside GM3 (d18:1(4E)) + H2O = a beta-D-Gal-(1-&gt;4)-beta-D-Glc-(1&lt;-&gt;1)-Cer(d18:1(4E)) + N-acetylneuraminate. The enzyme catalyses a ganglioside GT1b + H2O = a ganglioside GD1b + N-acetylneuraminate. Exo-alpha-sialidase that catalyzes the hydrolytic cleavage of the terminal sialic acid (N-acetylneuraminic acid, Neu5Ac) of a glycan moiety in the catabolism of glycolipids, glycoproteins and oligosacharides. Displays high catalytic efficiency for gangliosides including alpha-(2-&gt;3)-sialylated GD1a and GM3 and alpha-(2-&gt;8)-sialylated GD3. Plays a role in the regulation of transmembrane signaling through the modulation of ganglioside content of the lipid bilayer and by direct interaction with signaling receptors, such as EGFR. Desialylates EGFR and activates downstream signaling in proliferating cells. Contributes to clathrin-mediated endocytosis by regulating sorting of endocytosed receptors to early and recycling endosomes. This chain is Sialidase-3 (NEU3), found in Homo sapiens (Human).